The following is a 333-amino-acid chain: Ketol-acid reductoisomerase (NADP(+)) (333 aa).

Residues 2 to 182 form the KARI N-terminal Rossmann domain; it reads ANIYYDSDCD…GGGRAGILET (181 aa). Residues 25-28, Lys48, Ser51, Ser53, and 83-86 contribute to the NADP(+) site; these read YGSQ and DTIQ. Residue His108 is part of the active site. Position 134 (Gly134) interacts with NADP(+). In terms of domain architecture, KARI C-terminal knotted spans 183 to 331; that stretch reads SFREETETDL…KKLRSMMKWL (149 aa). The Mg(2+) site is built by Asp191, Glu195, Glu227, and Glu231. Position 252 (Ser252) interacts with substrate.

Belongs to the ketol-acid reductoisomerase family. Requires Mg(2+) as cofactor.

It catalyses the reaction (2R)-2,3-dihydroxy-3-methylbutanoate + NADP(+) = (2S)-2-acetolactate + NADPH + H(+). It carries out the reaction (2R,3R)-2,3-dihydroxy-3-methylpentanoate + NADP(+) = (S)-2-ethyl-2-hydroxy-3-oxobutanoate + NADPH + H(+). The protein operates within amino-acid biosynthesis; L-isoleucine biosynthesis; L-isoleucine from 2-oxobutanoate: step 2/4. It functions in the pathway amino-acid biosynthesis; L-valine biosynthesis; L-valine from pyruvate: step 2/4. Its function is as follows. Involved in the biosynthesis of branched-chain amino acids (BCAA). Catalyzes an alkyl-migration followed by a ketol-acid reduction of (S)-2-acetolactate (S2AL) to yield (R)-2,3-dihydroxy-isovalerate. In the isomerase reaction, S2AL is rearranged via a Mg-dependent methyl migration to produce 3-hydroxy-3-methyl-2-ketobutyrate (HMKB). In the reductase reaction, this 2-ketoacid undergoes a metal-dependent reduction by NADPH to yield (R)-2,3-dihydroxy-isovalerate. In Leptospira interrogans serogroup Icterohaemorrhagiae serovar copenhageni (strain Fiocruz L1-130), this protein is Ketol-acid reductoisomerase (NADP(+)).